Consider the following 99-residue polypeptide: UPF0213 protein spr1390 (99 aa).

In terms of domain architecture, GIY-YIG spans 3 to 78 (HKAYMYVLEC…KRKKRPQKEE (76 aa)).

It belongs to the UPF0213 family.

The sequence is that of UPF0213 protein spr1390 from Streptococcus pneumoniae (strain ATCC BAA-255 / R6).